Consider the following 215-residue polypeptide: Translation initiation factor IF-3 (215 aa).

Positions Ser-159–Asn-215 are disordered. Basic and acidic residues predominate over residues Leu-184–Arg-197. Residues Pro-200–Asn-215 show a composition bias toward low complexity.

This sequence belongs to the IF-3 family. Monomer.

Its subcellular location is the cytoplasm. IF-3 binds to the 30S ribosomal subunit and shifts the equilibrium between 70S ribosomes and their 50S and 30S subunits in favor of the free subunits, thus enhancing the availability of 30S subunits on which protein synthesis initiation begins. The polypeptide is Translation initiation factor IF-3 (Synechococcus sp. (strain RCC307)).